The primary structure comprises 360 residues: Membrane-bound lytic murein transglycosylase C (360 aa).

The signal sequence occupies residues 1–16 (MKKIFALALIAPLLIS). Cys-17 carries the N-palmitoyl cysteine lipid modification. The S-diacylglycerol cysteine moiety is linked to residue Cys-17.

The protein belongs to the transglycosylase Slt family.

The protein resides in the cell outer membrane. The catalysed reaction is Exolytic cleavage of the (1-&gt;4)-beta-glycosidic linkage between N-acetylmuramic acid (MurNAc) and N-acetylglucosamine (GlcNAc) residues in peptidoglycan, from either the reducing or the non-reducing ends of the peptidoglycan chains, with concomitant formation of a 1,6-anhydrobond in the MurNAc residue.. Murein-degrading enzyme. May play a role in recycling of muropeptides during cell elongation and/or cell division. The sequence is that of Membrane-bound lytic murein transglycosylase C from Cronobacter sakazakii (strain ATCC BAA-894) (Enterobacter sakazakii).